The chain runs to 239 residues: Large ribosomal subunit protein uL30 (239 aa).

A disordered region spans residues 1–37 (MSKFVPENVQKKLARDEKLRKAKAEQRKASSAQMKQR). Basic and acidic residues predominate over residues 9–28 (VQKKLARDEKLRKAKAEQRK).

The protein belongs to the universal ribosomal protein uL30 family.

The sequence is that of Large ribosomal subunit protein uL30 (RPL7) from Tetrahymena thermophila.